We begin with the raw amino-acid sequence, 252 residues long: 5'-nucleotidase SurE (252 aa).

The a divalent metal cation site is built by Asp-8, Asp-9, Ser-39, and Asn-91.

This sequence belongs to the SurE nucleotidase family. A divalent metal cation serves as cofactor.

The protein resides in the cytoplasm. The catalysed reaction is a ribonucleoside 5'-phosphate + H2O = a ribonucleoside + phosphate. Nucleotidase that shows phosphatase activity on nucleoside 5'-monophosphates. This chain is 5'-nucleotidase SurE, found in Legionella pneumophila (strain Lens).